A 294-amino-acid chain; its full sequence is Protoheme IX farnesyltransferase (294 aa).

The next 9 helical transmembrane spans lie at 8 to 28, 35 to 55, 81 to 101, 107 to 127, 133 to 153, 163 to 183, 209 to 226, 230 to 252, and 266 to 286; these read LTKP…FLIA, YSLF…GCVL, IFLN…FLFL, VLTI…YSLW, IYSI…GYCA, LMLL…IAIL, MVVY…FTVM, SYIF…FYGY, and FLLS…DHIL.

The protein belongs to the UbiA prenyltransferase family. Protoheme IX farnesyltransferase subfamily.

It is found in the cell inner membrane. It catalyses the reaction heme b + (2E,6E)-farnesyl diphosphate + H2O = Fe(II)-heme o + diphosphate. It participates in porphyrin-containing compound metabolism; heme O biosynthesis; heme O from protoheme: step 1/1. Its function is as follows. Converts heme B (protoheme IX) to heme O by substitution of the vinyl group on carbon 2 of heme B porphyrin ring with a hydroxyethyl farnesyl side group. This is Protoheme IX farnesyltransferase from Blochmanniella pennsylvanica (strain BPEN).